The primary structure comprises 378 residues: Dihydroorotate dehydrogenase (quinone) (378 aa).

Residues 77–81 (AGFDK) and threonine 101 each bind FMN. Lysine 81 contacts substrate. Residue 126–130 (NRMGF) coordinates substrate. Asparagine 158 and asparagine 191 together coordinate FMN. Position 191 (asparagine 191) interacts with substrate. Serine 194 functions as the Nucleophile in the catalytic mechanism. Asparagine 196 lines the substrate pocket. 2 residues coordinate FMN: lysine 229 and threonine 257. A substrate-binding site is contributed by 258 to 259 (NT). FMN is bound by residues glycine 287, glycine 316, and 337-338 (YT).

The protein belongs to the dihydroorotate dehydrogenase family. Type 2 subfamily. In terms of assembly, monomer. Requires FMN as cofactor.

It localises to the cell membrane. It catalyses the reaction (S)-dihydroorotate + a quinone = orotate + a quinol. Its pathway is pyrimidine metabolism; UMP biosynthesis via de novo pathway; orotate from (S)-dihydroorotate (quinone route): step 1/1. In terms of biological role, catalyzes the conversion of dihydroorotate to orotate with quinone as electron acceptor. This is Dihydroorotate dehydrogenase (quinone) from Synechococcus sp. (strain ATCC 27144 / PCC 6301 / SAUG 1402/1) (Anacystis nidulans).